The primary structure comprises 270 residues: MEQFYYVLKYLILGLFQGLTEPIPISSSGHLVLAQHLLGLKIEGFSFELLVNSASLLAVLLIYRNDLIRLTKNGLSYIFTRAEDAKSDFFFIIYLVIATIPAGVIGVLFKDYIDQYLKGVKMVGISLLITAVGLWIIRNLRGRKNDGDLSMKDAIIVGLAQACALIPGISRSGATIVAAMLLGMKQETALRFSFLLYIPVSLGGLLLSITDIANDPNLDTLFVPYVVAFIATFIMTYISLKWFMNIMAKGNLKYFSFYCIIVGVLTLIFL.

Helical transmembrane passes span 5-25 (YYVL…PIPI), 42-62 (IEGF…VLLI), 89-109 (FFFI…GVLF), 117-137 (LKGV…LWII), 192-212 (FSFL…ITDI), 220-240 (TLFV…YISL), and 250-270 (GNLK…LIFL).

Belongs to the UppP family.

It localises to the cell membrane. It carries out the reaction di-trans,octa-cis-undecaprenyl diphosphate + H2O = di-trans,octa-cis-undecaprenyl phosphate + phosphate + H(+). Catalyzes the dephosphorylation of undecaprenyl diphosphate (UPP). Confers resistance to bacitracin. This chain is Undecaprenyl-diphosphatase 1, found in Bacillus cereus (strain ATCC 14579 / DSM 31 / CCUG 7414 / JCM 2152 / NBRC 15305 / NCIMB 9373 / NCTC 2599 / NRRL B-3711).